The following is a 298-amino-acid chain: Ethanolamine ammonia-lyase small subunit (298 aa).

Adenosylcob(III)alamin is bound by residues Val210, Glu231, and Cys261.

Belongs to the EutC family. In terms of assembly, the basic unit is a heterodimer which dimerizes to form tetramers. The heterotetramers trimerize; 6 large subunits form a core ring with 6 small subunits projecting outwards. Adenosylcob(III)alamin serves as cofactor.

It localises to the bacterial microcompartment. It catalyses the reaction ethanolamine = acetaldehyde + NH4(+). The protein operates within amine and polyamine degradation; ethanolamine degradation. Catalyzes the deamination of various vicinal amino-alcohols to oxo compounds. Allows this organism to utilize ethanolamine as the sole source of nitrogen and carbon in the presence of external vitamin B12. The chain is Ethanolamine ammonia-lyase small subunit from Salmonella agona (strain SL483).